Reading from the N-terminus, the 242-residue chain is tRNA (guanine-N(1)-)-methyltransferase (242 aa).

Residues Gly-112 and 131–136 (LGDFIL) each bind S-adenosyl-L-methionine.

The protein belongs to the RNA methyltransferase TrmD family. Homodimer.

The protein localises to the cytoplasm. The catalysed reaction is guanosine(37) in tRNA + S-adenosyl-L-methionine = N(1)-methylguanosine(37) in tRNA + S-adenosyl-L-homocysteine + H(+). Specifically methylates guanosine-37 in various tRNAs. This chain is tRNA (guanine-N(1)-)-methyltransferase, found in Crocosphaera subtropica (strain ATCC 51142 / BH68) (Cyanothece sp. (strain ATCC 51142)).